Consider the following 261-residue polypeptide: MTHQTHAYHMVNPSPWPLTGALSALLMTSGLIMWFHFNSTTLLMLGLTTNMLTMYQWWRDIIRESTFQGHHTPNVQKGLRYGMILFIISEVLFFTGFFWAFYHSSLAPTPELGGCWPPTGIHPLNPLEVPLLNTSVLLASGVSITWAHHSLMEGNRNHMLQALFITIALGVYFTLLQASEYYEAPFTISDGVYGSTFFVATGFHGLHVIIGSTFLIVCFFRQLKFHFTSSHHFGFEAAAWYWHFVDVVWLFLYVSIYWWGS.

Over Met1 to Pro15 the chain is Mitochondrial matrix. Residues Trp16–Trp34 traverse the membrane as a helical segment. Residues Phe35 to Thr40 lie on the Mitochondrial intermembrane side of the membrane. Residues Thr41 to Thr66 traverse the membrane as a helical segment. At Phe67 to Thr72 the chain is on the mitochondrial matrix side. The helical transmembrane segment at Pro73–Ser105 threads the bilayer. At Leu106–Glu128 the chain is on the mitochondrial intermembrane side. The helical transmembrane segment at Val129–Met152 threads the bilayer. Over Glu153–Asn155 the chain is Mitochondrial matrix. The chain crosses the membrane as a helical span at residues Arg156 to Glu183. At Ala184–Asp190 the chain is on the mitochondrial intermembrane side. A helical membrane pass occupies residues Gly191 to Leu223. Residues Lys224–His232 are Mitochondrial matrix-facing. Residues Phe233–Ile256 traverse the membrane as a helical segment. Over Tyr257 to Ser261 the chain is Mitochondrial intermembrane.

This sequence belongs to the cytochrome c oxidase subunit 3 family. In terms of assembly, component of the cytochrome c oxidase (complex IV, CIV), a multisubunit enzyme composed of 14 subunits. The complex is composed of a catalytic core of 3 subunits MT-CO1, MT-CO2 and MT-CO3, encoded in the mitochondrial DNA, and 11 supernumerary subunits COX4I, COX5A, COX5B, COX6A, COX6B, COX6C, COX7A, COX7B, COX7C, COX8 and NDUFA4, which are encoded in the nuclear genome. The complex exists as a monomer or a dimer and forms supercomplexes (SCs) in the inner mitochondrial membrane with NADH-ubiquinone oxidoreductase (complex I, CI) and ubiquinol-cytochrome c oxidoreductase (cytochrome b-c1 complex, complex III, CIII), resulting in different assemblies (supercomplex SCI(1)III(2)IV(1) and megacomplex MCI(2)III(2)IV(2)).

The protein localises to the mitochondrion inner membrane. It catalyses the reaction 4 Fe(II)-[cytochrome c] + O2 + 8 H(+)(in) = 4 Fe(III)-[cytochrome c] + 2 H2O + 4 H(+)(out). Its function is as follows. Component of the cytochrome c oxidase, the last enzyme in the mitochondrial electron transport chain which drives oxidative phosphorylation. The respiratory chain contains 3 multisubunit complexes succinate dehydrogenase (complex II, CII), ubiquinol-cytochrome c oxidoreductase (cytochrome b-c1 complex, complex III, CIII) and cytochrome c oxidase (complex IV, CIV), that cooperate to transfer electrons derived from NADH and succinate to molecular oxygen, creating an electrochemical gradient over the inner membrane that drives transmembrane transport and the ATP synthase. Cytochrome c oxidase is the component of the respiratory chain that catalyzes the reduction of oxygen to water. Electrons originating from reduced cytochrome c in the intermembrane space (IMS) are transferred via the dinuclear copper A center (CU(A)) of subunit 2 and heme A of subunit 1 to the active site in subunit 1, a binuclear center (BNC) formed by heme A3 and copper B (CU(B)). The BNC reduces molecular oxygen to 2 water molecules using 4 electrons from cytochrome c in the IMS and 4 protons from the mitochondrial matrix. The sequence is that of Cytochrome c oxidase subunit 3 (MT-CO3) from Litocranius walleri (Gerenuk).